Consider the following 486-residue polypeptide: G2/mitotic-specific cyclin-4 (486 aa).

Disordered regions lie at residues 1 to 80 (MRSY…SSNK) and 105 to 126 (VLLN…DKEN). The segment covering 25–41 (ANLSSNHTTAGQPSTSS) has biased composition (polar residues). Residues 108-123 (NDDDDETDDEFDDEED) are compositionally biased toward acidic residues. Positions 122-184 (EDKENRYHDL…QSHTQDMRSI (63 aa)) form a coiled coil. The Cyclin N-terminal domain occupies 234 to 359 (EIFNYLHELE…FMIDVLEFDL (126 aa)).

It belongs to the cyclin family. Cyclin AB subfamily. Interacts with IQG1.

Its function is as follows. 2/mitotic-specific cyclin essential for the control of the cell cycle at the G2/M (mitosis) transition. G2/M cyclins accumulate steadily during G2 and are abruptly destroyed at mitosis. Degradation is necessary for the cell to exit from mitosis. Plays a role in morphogenesis by negatively regulating polarized growth. Through binding to CDC28 regulates cytokinesis, partly by phosphorylation of the actomyosin ring component IQG1. The chain is G2/mitotic-specific cyclin-4 (CLB4) from Candida albicans (strain SC5314 / ATCC MYA-2876) (Yeast).